Here is a 403-residue protein sequence, read N- to C-terminus: Flavohemoprotein (403 aa).

The region spanning 1–138 is the Globin domain; that stretch reads MLTQKTKDIV…LADVLMGMES (138 aa). Heme b is bound at residue His-85. Active-site charge relay system residues include Tyr-95 and Glu-137. Residues 149–403 are reductase; it reads GGWKGWRTFV…EVFGPDLFAE (255 aa). In terms of domain architecture, FAD-binding FR-type spans 152 to 262; that stretch reads KGWRTFVIRE…AAPYGSFHID (111 aa). FAD contacts are provided by residues Tyr-190 and 206-209; that span reads RQYS. 275-280 provides a ligand contact to NADP(+); that stretch reads GVGLTP. 395–398 is an FAD binding site; sequence VFGP.

It belongs to the globin family. Two-domain flavohemoproteins subfamily. This sequence in the C-terminal section; belongs to the flavoprotein pyridine nucleotide cytochrome reductase family. As to quaternary structure, monomer. FAD serves as cofactor. It depends on heme b as a cofactor.

The protein resides in the cytoplasm. It carries out the reaction 2 nitric oxide + NADPH + 2 O2 = 2 nitrate + NADP(+) + H(+). It catalyses the reaction 2 nitric oxide + NADH + 2 O2 = 2 nitrate + NAD(+) + H(+). Is involved in NO detoxification in an aerobic process, termed nitric oxide dioxygenase (NOD) reaction that utilizes O(2) and NAD(P)H to convert NO to nitrate, which protects the bacterium from various noxious nitrogen compounds. Therefore, plays a central role in the inducible response to nitrosative stress. Functionally, in the presence of oxygen and NADH, FHP has NADH oxidase activity, which leads to the generation of superoxide and H(2)O(2), both in vitro and in vivo, and it has been suggested that FHP might act as an amplifier of superoxide stress. Under anaerobic conditions, FHP also exhibits nitric oxide reductase and FAD reductase activities. However, all these reactions are much lower than NOD activity. The chain is Flavohemoprotein (hmp) from Cupriavidus necator (strain ATCC 17699 / DSM 428 / KCTC 22496 / NCIMB 10442 / H16 / Stanier 337) (Ralstonia eutropha).